The chain runs to 459 residues: Mycothione reductase (459 aa).

Residue 31–39 (EQGTFGGTC) coordinates FAD. C39 and C44 are oxidised to a cystine. Residue H444 is the Proton acceptor of the active site.

The protein belongs to the class-I pyridine nucleotide-disulfide oxidoreductase family. In terms of assembly, homodimer. FAD is required as a cofactor.

It catalyses the reaction 2 mycothiol + NADP(+) = mycothione + NADPH + H(+). The catalysed reaction is 2 mycothiol + NAD(+) = mycothione + NADH + H(+). In terms of biological role, catalyzes the NAD(P)H-dependent reduction of mycothione (the oxidized disulfide form of mycothiol) to mycothiol. The polypeptide is Mycothione reductase (mtr) (Mycobacterium tuberculosis (strain CDC 1551 / Oshkosh)).